The following is a 70-amino-acid chain: Large ribosomal subunit protein bL31 (70 aa).

The Zn(2+) site is built by Cys-16, Cys-18, Cys-37, and Cys-40.

This sequence belongs to the bacterial ribosomal protein bL31 family. Type A subfamily. As to quaternary structure, part of the 50S ribosomal subunit. It depends on Zn(2+) as a cofactor.

Binds the 23S rRNA. The protein is Large ribosomal subunit protein bL31 of Enterobacter sp. (strain 638).